Consider the following 470-residue polypeptide: Argininosuccinate lyase (470 aa).

The protein belongs to the lyase 1 family. Argininosuccinate lyase subfamily.

The protein resides in the cytoplasm. It catalyses the reaction 2-(N(omega)-L-arginino)succinate = fumarate + L-arginine. It participates in amino-acid biosynthesis; L-arginine biosynthesis; L-arginine from L-ornithine and carbamoyl phosphate: step 3/3. The protein is Argininosuccinate lyase of Mycolicibacterium gilvum (strain PYR-GCK) (Mycobacterium gilvum (strain PYR-GCK)).